We begin with the raw amino-acid sequence, 382 residues long: Galactokinase (382 aa).

34–37 (EHTD) lines the substrate pocket. Residue 124–130 (GAGLSSS) coordinates ATP. Mg(2+) is bound by residues Ser130 and Glu162. Catalysis depends on Asp174, which acts as the Proton acceptor. Residue Tyr223 participates in substrate binding.

This sequence belongs to the GHMP kinase family. GalK subfamily.

It localises to the cytoplasm. The enzyme catalyses alpha-D-galactose + ATP = alpha-D-galactose 1-phosphate + ADP + H(+). It functions in the pathway carbohydrate metabolism; galactose metabolism. Catalyzes the transfer of the gamma-phosphate of ATP to D-galactose to form alpha-D-galactose-1-phosphate (Gal-1-P). The protein is Galactokinase of Salmonella agona (strain SL483).